The chain runs to 889 residues: DNA mismatch repair protein MutS (889 aa).

Residue 641-648 participates in ATP binding; it reads GPNMAGKS.

This sequence belongs to the DNA mismatch repair MutS family.

Functionally, this protein is involved in the repair of mismatches in DNA. It is possible that it carries out the mismatch recognition step. This protein has a weak ATPase activity. The polypeptide is DNA mismatch repair protein MutS (Orientia tsutsugamushi (strain Boryong) (Rickettsia tsutsugamushi)).